The sequence spans 637 residues: Chaperone protein HtpG (637 aa).

The interval 1 to 348 (MAEAGQMEKH…SNDLPLNVSR (348 aa)) is a; substrate-binding. The b stretch occupies residues 349–565 (EILQDNKITR…DNDMSTQMAK (217 aa)). Residues 566–637 (LMEAAGQAVP…TRLNKLMLNA (72 aa)) are c.

It belongs to the heat shock protein 90 family. In terms of assembly, homodimer.

The protein localises to the cytoplasm. Its function is as follows. Molecular chaperone. Has ATPase activity. This chain is Chaperone protein HtpG, found in Idiomarina loihiensis (strain ATCC BAA-735 / DSM 15497 / L2-TR).